We begin with the raw amino-acid sequence, 1488 residues long: Eukaryotic translation initiation factor 4G (1488 aa).

Disordered regions lie at residues 196–320 (VQHR…GQTS), 337–367 (DSEKVDLTSKVSGLTSATSESSISPILGKSE), and 415–707 (THQI…MTEA). 2 stretches are compositionally biased toward basic and acidic residues: residues 216–244 (VSEKESKAPSIPEKHSKESKAPSAVEKHP) and 274–299 (ADEKKESLPMTDSLKDNKKNATRNDT). Composition is skewed to polar residues over residues 300 to 310 (KNLPQQPQSAS), 345 to 360 (SKVSGLTSATSESSIS), 448 to 464 (SLATSKPGNSDATSFVT), and 473 to 495 (CTTSVPEDHSLMNTSHNKDTQTL). Residues 496-520 (SASVDASDVSEVNSGTSSESTSQST) show a composition bias toward low complexity. Residues 555-566 (QVKHADGAKDES) show a composition bias toward basic and acidic residues. Residues 627 to 646 (QEQSESVATSDGADSSSTVD) are compositionally biased toward polar residues. Residues 651 to 671 (LPEESEREVMCEDDGKKKVEP) are compositionally biased toward basic and acidic residues. Residues 683–696 (PKLQSSDSGNQASA) show a composition bias toward polar residues. The segment at 709 to 721 (GRKKYSRDFLLTF) is EIF4E-binding. Basic and acidic residues predominate over residues 753–784 (DREPHPSSARGSDRPTSRGDRRGPAMDDDKWL). 3 disordered regions span residues 753-795 (DREP…PNRD), 974-1000 (RGEREEAEADKTEEEGEIKQTKEEREE), and 1107-1299 (WQQR…SEEE). In terms of domain architecture, MIF4G spans 883 to 1106 (QRQLKAILNK…RDSIDLRKNK (224 aa)). The span at 978 to 989 (EEAEADKTEEEG) shows a compositional bias: acidic residues. Basic and acidic residues-rich tracts occupy residues 990–1000 (EIKQTKEEREE), 1111–1132 (RKVDGPKKIDEVHRDAAQERHA), 1181–1191 (IRYEQERHQFD), and 1254–1267 (TREDTSSRIPDRFS). The segment covering 1273–1294 (AAQSASSSHRPASQEGRSGNKS) has biased composition (polar residues). The MI domain maps to 1299–1423 (ELREKSIATI…VLQDVGKLIE (125 aa)).

It belongs to the eukaryotic initiation factor 4G family. As to quaternary structure, EIF4F is a multi-subunit complex, the composition of which varies with external and internal environmental conditions. It is composed of at least EIF4A, EIF4E and EIF4G. In higher plants two isoforms of EIF4F have been identified, named isoform EIF4F and isoform EIF(iso)4F. Isoform EIF4F has subunits p220 and p26, whereas isoform EIF(iso)4F has subunits p82 and p28.

Its function is as follows. Component of the protein complex eIF4F, which is involved in the recognition of the mRNA cap, ATP-dependent unwinding of 5'-terminal secondary structure and recruitment of mRNA to the ribosome. The sequence is that of Eukaryotic translation initiation factor 4G from Triticum aestivum (Wheat).